The chain runs to 577 residues: Urease subunit alpha (577 aa).

The Urease domain occupies Gly-136 to Phe-577. Ni(2+) is bound by residues His-141, His-143, and Lys-224. The residue at position 224 (Lys-224) is an N6-carboxylysine. Residue His-226 participates in substrate binding. 2 residues coordinate Ni(2+): His-253 and His-279. His-327 functions as the Proton donor in the catalytic mechanism. A Ni(2+)-binding site is contributed by Asp-367.

Belongs to the metallo-dependent hydrolases superfamily. Urease alpha subunit family. In terms of assembly, heterotrimer of UreA (gamma), UreB (beta) and UreC (alpha) subunits. Three heterotrimers associate to form the active enzyme. Requires Ni cation as cofactor. Post-translationally, carboxylation allows a single lysine to coordinate two nickel ions.

The protein resides in the cytoplasm. The enzyme catalyses urea + 2 H2O + H(+) = hydrogencarbonate + 2 NH4(+). It functions in the pathway nitrogen metabolism; urea degradation; CO(2) and NH(3) from urea (urease route): step 1/1. The polypeptide is Urease subunit alpha (Mycobacteroides abscessus (strain ATCC 19977 / DSM 44196 / CCUG 20993 / CIP 104536 / JCM 13569 / NCTC 13031 / TMC 1543 / L948) (Mycobacterium abscessus)).